The chain runs to 338 residues: Outer membrane transporter protein TsaT (338 aa).

The signal sequence occupies residues 1–22; sequence MNFRRRLCTAALIAALPLASQA.

As to quaternary structure, part of a two-component transport system composed of TsaT and TsaS.

Its subcellular location is the cell outer membrane. In terms of biological role, involved in the uptake of p-toluenesulphonate (TSA). Forms a large, general diffusion pore with a preference for anions. The protein is Outer membrane transporter protein TsaT (tsaT) of Comamonas testosteroni (Pseudomonas testosteroni).